We begin with the raw amino-acid sequence, 286 residues long: Phosphatidylserine decarboxylase proenzyme (286 aa).

Residues Asp-90, His-147, and Ser-250 each act as charge relay system; for autoendoproteolytic cleavage activity in the active site. Residue Ser-250 is the Schiff-base intermediate with substrate; via pyruvic acid; for decarboxylase activity of the active site. At Ser-250 the chain carries Pyruvic acid (Ser); by autocatalysis.

This sequence belongs to the phosphatidylserine decarboxylase family. PSD-B subfamily. Prokaryotic type I sub-subfamily. Heterodimer of a large membrane-associated beta subunit and a small pyruvoyl-containing alpha subunit. Pyruvate serves as cofactor. Is synthesized initially as an inactive proenzyme. Formation of the active enzyme involves a self-maturation process in which the active site pyruvoyl group is generated from an internal serine residue via an autocatalytic post-translational modification. Two non-identical subunits are generated from the proenzyme in this reaction, and the pyruvate is formed at the N-terminus of the alpha chain, which is derived from the carboxyl end of the proenzyme. The autoendoproteolytic cleavage occurs by a canonical serine protease mechanism, in which the side chain hydroxyl group of the serine supplies its oxygen atom to form the C-terminus of the beta chain, while the remainder of the serine residue undergoes an oxidative deamination to produce ammonia and the pyruvoyl prosthetic group on the alpha chain. During this reaction, the Ser that is part of the protease active site of the proenzyme becomes the pyruvoyl prosthetic group, which constitutes an essential element of the active site of the mature decarboxylase.

The protein localises to the cell membrane. It catalyses the reaction a 1,2-diacyl-sn-glycero-3-phospho-L-serine + H(+) = a 1,2-diacyl-sn-glycero-3-phosphoethanolamine + CO2. The protein operates within phospholipid metabolism; phosphatidylethanolamine biosynthesis; phosphatidylethanolamine from CDP-diacylglycerol: step 2/2. Functionally, catalyzes the formation of phosphatidylethanolamine (PtdEtn) from phosphatidylserine (PtdSer). The protein is Phosphatidylserine decarboxylase proenzyme of Psychromonas ingrahamii (strain DSM 17664 / CCUG 51855 / 37).